A 696-amino-acid chain; its full sequence is Catalase (696 aa).

Active-site residues include histidine 64 and asparagine 137. A disordered region spans residues 187-211; it reads SLAQGSQISSERGSPKAYSNTEPNK. Positions 189-208 are enriched in polar residues; the sequence is AQGSQISSERGSPKAYSNTE. Residue tyrosine 353 coordinates heme.

This sequence belongs to the catalase family. Requires heme as cofactor.

The catalysed reaction is 2 H2O2 = O2 + 2 H2O. Occurs in almost all aerobically respiring organisms and serves to protect cells from the toxic effects of hydrogen peroxide. The protein is Catalase of Penicillium janthinellum (Penicillium vitale).